Consider the following 509-residue polypeptide: Erythropoietin receptor (509 aa).

An N-terminal signal peptide occupies residues 1–24 (MYHFGATLWPGVGSLCLLLAGATW). The Extracellular portion of the chain corresponds to 25–251 (APSPNSPDAK…SLLTASDLDP (227 aa)). Intrachain disulfides connect C52–C62 and C91–C107. The Fibronectin type-III domain occupies 148–248 (PPAGLLARRA…EPASLLTASD (101 aa)). Residue N184 is glycosylated (N-linked (GlcNAc...) asparagine). The WSXWS motif motif lies at 234–238 (WSAWS). Residues 252-274 (LILTLSLILVLILLLLAVLALLS) form a helical membrane-spanning segment. At 275-509 (HRRTLKQKIW…PSPPNYVTCS (235 aa)) the chain is on the cytoplasmic side. K282 participates in a covalent cross-link: Glycyl lysine isopeptide (Lys-Gly) (interchain with G-Cter in ubiquitin). The short motif at 283-291 (IWPGIPSPE) is the Box 1 motif element. 2 positions are modified to phosphotyrosine; by JAK2: Y369 and Y427. The short motif at 453–458 (LKYLYL) is the ITIM motif element. K454 participates in a covalent cross-link: Glycyl lysine isopeptide (Lys-Gly) (interchain with G-Cter in ubiquitin). Residues Y455, Y457, Y469, Y486, Y490, and Y505 each carry the phosphotyrosine; by JAK2 modification. A disordered region spans residues 467 to 509 (TDYSSGGSQETQGGSSSGPYSNPYENSLVPAPEPSPPNYVTCS). A compositionally biased stretch (low complexity) spans 470–493 (SSGGSQETQGGSSSGPYSNPYENS).

It belongs to the type I cytokine receptor family. Type 1 subfamily. Forms homodimers on EPO stimulation. The tyrosine-phosphorylated form interacts with several SH2 domain-containing proteins including LYN, the adapter protein SH2B2, PTPN6, PTPN11, JAK2, PI3 kinases, STAT5A/B, SOCS3, CRKL. Interacts with INPP5D/SHIP1. SH2B2 binding inhibits the JAK-STAT signaling. Interacts with RHEX; this interaction occurs in a erythropoietin (EPO)-dependent manner. Interacts with ATXN2L. On EPO stimulation, phosphorylated on C-terminal tyrosine residues by JAK2. The phosphotyrosine motifs are also recruitment sites for several SH2-containing proteins and adapter proteins which mediate cell proliferation. Phosphorylation on Tyr-455 is required for PTPN6 interaction, Tyr-427 for PTPN11. Tyr-427 is also required for SOCS3 binding, but Tyr-455/Tyr-457 motif is the preferred binding site. Post-translationally, ubiquitinated by the ECS(SOCS2) complex following ligand-binding and phosphorylation by JAK2, leading to its degradation by the proteasome. Regulation by the ECS(SOCS2) complex acts as a negative feedback loop of erythropoietin-mediated signaling pathway. Ubiquitination at Lys-282 mediates receptor internalization, whereas ubiquitination at Lys-454 promotes trafficking of activated receptors to the lysosomes for degradation. Ubiquitinated by NOSIP; appears to be either multi-monoubiquitinated or polyubiquitinated. Ubiquitination mediates proliferation and survival of EPO-dependent cells.

It is found in the cell membrane. Functionally, receptor for erythropoietin, which mediates erythropoietin-induced erythroblast proliferation and differentiation. Upon EPO stimulation, EPOR dimerizes triggering the JAK2/STAT5 signaling cascade. In some cell types, can also activate STAT1 and STAT3. May also activate the LYN tyrosine kinase. Its function is as follows. Isoform EPOR-T acts as a dominant-negative receptor of EPOR-mediated signaling. The protein is Erythropoietin receptor (EPOR) of Sus scrofa (Pig).